The chain runs to 171 residues: Nicotinamide-nucleotide adenylyltransferase (171 aa).

Belongs to the archaeal NMN adenylyltransferase family.

The protein localises to the cytoplasm. It carries out the reaction beta-nicotinamide D-ribonucleotide + ATP + H(+) = diphosphate + NAD(+). The protein operates within cofactor biosynthesis; NAD(+) biosynthesis; NAD(+) from nicotinamide D-ribonucleotide: step 1/1. The sequence is that of Nicotinamide-nucleotide adenylyltransferase from Methanococcus maripaludis (strain DSM 14266 / JCM 13030 / NBRC 101832 / S2 / LL).